The primary structure comprises 696 residues: C2 domain-containing protein 2 (696 aa).

A helical transmembrane segment spans residues 13 to 33 (AQWLALVSLFVAALATVGLYL). The SMP-LBD domain maps to 51–242 (EPGEGPRPGS…PTTVKEAQNL (192 aa)). Position 60 is a phosphoserine (Ser60). The 118-residue stretch at 245-362 (AASTAQESCP…KKQPSGPQSF (118 aa)) folds into the C2 domain. Ser435 and Ser441 each carry phosphoserine. The residue at position 445 (Thr445) is a Phosphothreonine. Positions 539-580 (VDSTHQEDAPSHPERAAASAPPEEAESAQASLAPKPQEDELD) are disordered. Residues 542-553 (THQEDAPSHPER) show a composition bias toward basic and acidic residues. Positions 554-572 (AAASAPPEEAESAQASLAP) are enriched in low complexity. The residue at position 581 (Ser581) is a Phosphoserine.

The protein localises to the membrane. The sequence is that of C2 domain-containing protein 2 (C2CD2) from Homo sapiens (Human).